Consider the following 320-residue polypeptide: Probable cell division protein WhiA (320 aa).

The segment at residues 276–310 (TLKELGEMVESGKVSKSGVNHRLRKIDELAEKLRA) is a DNA-binding region (H-T-H motif).

This sequence belongs to the WhiA family.

Functionally, involved in cell division and chromosome segregation. This Halalkalibacterium halodurans (strain ATCC BAA-125 / DSM 18197 / FERM 7344 / JCM 9153 / C-125) (Bacillus halodurans) protein is Probable cell division protein WhiA.